We begin with the raw amino-acid sequence, 496 residues long: Probable cytosol aminopeptidase (496 aa).

Mn(2+) is bound by residues Lys266 and Asp271. The active site involves Lys278. Residues Asp289, Asp348, and Glu350 each coordinate Mn(2+). Arg352 is an active-site residue.

Belongs to the peptidase M17 family. It depends on Mn(2+) as a cofactor.

The protein localises to the cytoplasm. It carries out the reaction Release of an N-terminal amino acid, Xaa-|-Yaa-, in which Xaa is preferably Leu, but may be other amino acids including Pro although not Arg or Lys, and Yaa may be Pro. Amino acid amides and methyl esters are also readily hydrolyzed, but rates on arylamides are exceedingly low.. The enzyme catalyses Release of an N-terminal amino acid, preferentially leucine, but not glutamic or aspartic acids.. Its function is as follows. Presumably involved in the processing and regular turnover of intracellular proteins. Catalyzes the removal of unsubstituted N-terminal amino acids from various peptides. This Azotobacter vinelandii (strain DJ / ATCC BAA-1303) protein is Probable cytosol aminopeptidase.